The chain runs to 197 residues: Small ribosomal subunit protein uS11m (197 aa).

Basic and acidic residues predominate over residues 43-52 (AAKEEVEKAE). The segment at 43 to 66 (AAKEEVEKAETPAPAPSRSSFSIY) is disordered.

This sequence belongs to the universal ribosomal protein uS11 family. In terms of assembly, component of the mitochondrial ribosome small subunit (28S) which comprises a 12S rRNA and about 30 distinct proteins.

The protein localises to the mitochondrion. The polypeptide is Small ribosomal subunit protein uS11m (MRPS11) (Bos taurus (Bovine)).